The primary structure comprises 619 residues: Nuclear hormone receptor family member nhr-6 (619 aa).

The span at M1–C18 shows a compositional bias: polar residues. Disordered stretches follow at residues M1 to S29, M58 to T86, Q103 to P134, and Q196 to P232. Low complexity predominate over residues S19–S29. Polar residues predominate over residues K125–P134. The segment covering G206–P232 has biased composition (low complexity). Residues D265–H340 constitute a DNA-binding region (nuclear receptor). NR C4-type zinc fingers lie at residues C268 to C288 and C304 to C328. A disordered region spans residues G345–P365. Over residues R346–L356 the composition is skewed to basic residues. The region spanning P365–S600 is the NR LBD domain. The tract at residues L589 to S600 is AF-2.

It belongs to the nuclear hormone receptor family. NR4 subfamily. In terms of tissue distribution, in hermaphrodites, expressed in the developing spermatheca and dorsal uterus. Expression includes the 8 cells of the dorsal somatic gonad primordium and the sujc cells that form the core of the spermatheca-uterine valve. Expressed in the precursor cells of the spermatheca-sheath lineages (SS cells) and in the precursors and descendents of the dorsal-uterine lineage (DU cells). In both hermaphroditic and male animals, expressed in a pair of head chemosensory neurons.

The protein resides in the nucleus. Functionally, transcriptional activator that induces gene expression by binding to the NGFI-B response element (NBRE) 5'-AAAGGTCA-3'. Required for proper morphogenesis of the spermatheca and the spermatheca-uterine valve formation. Promotes cell proliferation and differentiation of the spermatheca precursor cells during spermatheca development in larval stage L4. Might play a role in promoting G1/S phase progression in the spermatheca precursor cell lineage. Also required for the differentiation of the spermatheca-uterine junction core (sujc) cells which are generating the spermatheca-uterine valve. The sequence is that of Nuclear hormone receptor family member nhr-6 (nhr-6) from Caenorhabditis elegans.